The sequence spans 188 residues: MDLLIVGLGNPGSNFFHTRHNVGFGLIDKLVVKHGLSLKKVKNYEYSDFNFENKRIVLIKPLTYMNLSGNIFPSVFARFYMKMTNLLIVVDNVDLPLGKCKLRKVGGTSTHNGLRSISGSLGSTKYSRLYIGVGNNNESSLRDFVLAKFSDSELKRIKNVFNFLSEEILSIDECNFENKIATINSSSF.

F15 is a binding site for tRNA. H20 functions as the Proton acceptor in the catalytic mechanism. Positions 64, 66, and 112 each coordinate tRNA.

It belongs to the PTH family. In terms of assembly, monomer.

It is found in the cytoplasm. The enzyme catalyses an N-acyl-L-alpha-aminoacyl-tRNA + H2O = an N-acyl-L-amino acid + a tRNA + H(+). In terms of biological role, hydrolyzes ribosome-free peptidyl-tRNAs (with 1 or more amino acids incorporated), which drop off the ribosome during protein synthesis, or as a result of ribosome stalling. Functionally, catalyzes the release of premature peptidyl moieties from peptidyl-tRNA molecules trapped in stalled 50S ribosomal subunits, and thus maintains levels of free tRNAs and 50S ribosomes. This is Peptidyl-tRNA hydrolase from Borrelia turicatae (strain 91E135).